Here is a 618-residue protein sequence, read N- to C-terminus: Keratin, type I cytoskeletal 9 (618 aa).

The interval 1–49 (MSFRQISSSFRSSSGSSCGGGGGRGASRGSMRSSFGRSSRAGGESRFGS) is disordered. The segment at 1–137 (MSFRQISSSF…GGEGSILNTN (137 aa)) is head. Low complexity predominate over residues 7–16 (SSSFRSSSGS). 2 positions are modified to phosphoserine: serine 14 and serine 17. Positions 17–26 (SCGGGGGRGA) are enriched in gly residues. Positions 27–49 (SRGSMRSSFGRSSRAGGESRFGS) are enriched in low complexity. Positions 138-173 (EKVVMQNLNSRLASYMDKVQELEEDNANLEKQIQEW) are coil 1A. The IF rod domain maps to 138-450 (EKVVMQNLNS…KLLEGGQQDF (313 aa)). Residues 174-192 (YSRKGNRVFQKDYSHYYNT) are linker 1. Residues 193–284 (IEDLKDRIVD…KSHKEEMNQL (92 aa)) form a coil 1B region. The tract at residues 285-307 (TGLNDGDVNVEINVAPSTDLTQV) is linker 12. Residues 308 to 446 (LNDMREEYEH…ETYRKLLEGG (139 aa)) form a coil 2 region. Residues 447 to 609 (QQDFESSGAG…GGGNTRPSQS (163 aa)) are tail. The disordered stretch occupies residues 449 to 618 (DFESSGAGQI…SQSSQIPRLR (170 aa)). Gly residues predominate over residues 456-603 (GQIGFGSGKG…GSGGSYGGGN (148 aa)). Low complexity predominate over residues 607–618 (SQSQSSQIPRLR).

Belongs to the intermediate filament family. In terms of assembly, heterotetramer of two type I and two type II keratins. As to expression, expressed in the perinuclear ring of spermatid manchettes within testis and in keratinocytes of the suprabasal layer of footpad epidermis (at protein level).

May serve an important special function either in the mature palmar and plantar skin tissue or in the morphogenetic program of the formation of these tissues. Plays a role in keratin filament assembly. May be involved in spermatid nuclear shaping and sperm development. This is Keratin, type I cytoskeletal 9 (Krt9) from Rattus norvegicus (Rat).